Reading from the N-terminus, the 36-residue chain is Photosystem I reaction center subunit VIII (36 aa).

Residues 9–29 traverse the membrane as a helical segment; the sequence is IFVPLVGLVFPAIAMASLSLY.

The protein belongs to the PsaI family.

The protein resides in the plastid. Its subcellular location is the chloroplast thylakoid membrane. Its function is as follows. May help in the organization of the PsaL subunit. This is Photosystem I reaction center subunit VIII from Phalaenopsis aphrodite subsp. formosana (Moth orchid).